The primary structure comprises 2544 residues: Highly reducing polyketide synthase pkhB (2544 aa).

Positions 9 to 438 constitute a Ketosynthase family 3 (KS3) domain; it reads SEPIAIIGMS…GTNAHVILES (430 aa). Residues cysteine 182, histidine 317, and histidine 358 each act as for beta-ketoacyl synthase activity in the active site. The segment at 566-876 is malonyl-CoA:ACP transacylase (MAT) domain; sequence VFTGQVFRRS…PYWGCLVRDE (311 aa). The segment at 948–1082 is N-terminal hotdog fold; it reads HELLGMPVAG…GMVGIEESAV (135 aa). A dehydratase (DH) domain region spans residues 948–1252; sequence HELLGMPVAG…VELAALGRGS (305 aa). The 307-residue stretch at 948-1254 folds into the PKS/mFAS DH domain; that stretch reads HELLGMPVAG…LAALGRGSSA (307 aa). The Proton acceptor; for dehydratase activity role is filled by histidine 980. Residues 1095–1254 are C-terminal hotdog fold; it reads YTRQPNPQDL…LAALGRGSSA (160 aa). The active-site Proton donor; for dehydratase activity is the aspartate 1165. A methyltransferase (CMet) domain region spans residues 1398–1573; that stretch reads SSLRQLSALL…FSGLDLEIYD (176 aa). The segment at 1826-2142 is enoyl reductase (ER) domain; that stretch reads GHLGTLAFAE…TGDQMGKVVL (317 aa). The segment at 2169–2356 is ketoreductase (KR) domain; it reads ASYLIVGGVG…GVAIDLGPIS (188 aa). The Carrier domain maps to 2462–2539; it reads EGARLIGAAI…ALAGLVAEKS (78 aa). At serine 2499 the chain carries O-(pantetheine 4'-phosphoryl)serine.

It depends on pantetheine 4'-phosphate as a cofactor.

The protein operates within secondary metabolite biosynthesis. Functionally, highly reducing polyketide synthase; part of the pkh gene cluster that mediates the biosynthesis of 2,4-dihydroxy-6-[(3E,5E,7E)-2-oxonona-3,5,7-trienyl]benzaldehyde. The highly reducing polyketide synthase pkhB first produces the (2E,4E,6E)-octa-2,4,6-trienyl strater unit for the non-reducing polyketide synthase pkhA. This octatrienoyl starter is then loaded onto the SAT domain of the NR-PKS pkhA to be condensed with 4 malonyl-CoA units to yield 2,4-dihydroxy-6-[(3E,5E,7E)-2-oxonona-3,5,7-trienyl]benzaldehyde. This chain is Highly reducing polyketide synthase pkhB, found in Emericella nidulans (strain FGSC A4 / ATCC 38163 / CBS 112.46 / NRRL 194 / M139) (Aspergillus nidulans).